The chain runs to 322 residues: ATP-dependent 6-phosphofructokinase (322 aa).

Residue Gly13 coordinates ATP. Position 23–27 (23–27) interacts with ADP; that stretch reads RAVVR. ATP contacts are provided by residues 74 to 75 and 104 to 107; these read RC and GDGS. Position 105 (Asp105) interacts with Mg(2+). Substrate is bound at residue 127-129; that stretch reads TID. The active-site Proton acceptor is Asp129. Arg156 is a binding site for ADP. Substrate-binding positions include Arg164 and 171 to 173; that span reads MGR. Residues 187–189 and 215–217 each bind ADP; these read GAE and KRH. Substrate-binding positions include Glu224, Arg246, and 252 to 255; that span reads HIQR.

This sequence belongs to the phosphofructokinase type A (PFKA) family. ATP-dependent PFK group I subfamily. Prokaryotic clade 'B1' sub-subfamily. Homotetramer. Mg(2+) serves as cofactor.

It is found in the cytoplasm. It catalyses the reaction beta-D-fructose 6-phosphate + ATP = beta-D-fructose 1,6-bisphosphate + ADP + H(+). It participates in carbohydrate degradation; glycolysis; D-glyceraldehyde 3-phosphate and glycerone phosphate from D-glucose: step 3/4. Allosterically activated by ADP and other diphosphonucleosides, and allosterically inhibited by phosphoenolpyruvate. Catalyzes the phosphorylation of D-fructose 6-phosphate to fructose 1,6-bisphosphate by ATP, the first committing step of glycolysis. This chain is ATP-dependent 6-phosphofructokinase, found in Paenibacillus macquariensis (Bacillus macquariensis).